We begin with the raw amino-acid sequence, 230 residues long: Flagellar L-ring protein (230 aa).

An N-terminal signal peptide occupies residues M1–T15. C16 carries N-palmitoyl cysteine lipidation. A lipid anchor (S-diacylglycerol cysteine) is attached at C16.

It belongs to the FlgH family. As to quaternary structure, the basal body constitutes a major portion of the flagellar organelle and consists of four rings (L,P,S, and M) mounted on a central rod.

The protein resides in the cell outer membrane. The protein localises to the bacterial flagellum basal body. Functionally, assembles around the rod to form the L-ring and probably protects the motor/basal body from shearing forces during rotation. In Xanthomonas oryzae pv. oryzae (strain MAFF 311018), this protein is Flagellar L-ring protein.